The chain runs to 421 residues: Putative bifunctional polynucleotide phosphatase/kinase (421 aa).

A phosphatase region spans residues 25 to 231; it reads DSYLKGIINN…SENLKTNYKL (207 aa). Residues 235–415 are kinase; the sequence is NPTEIIDEIE…DDPKWKRSFM (181 aa). ATP is bound at residue 265-272; it reads GQPGSGKS.

It in the N-terminal section; belongs to the DNA 3' phosphatase family.

The catalysed reaction is a 3'end (2'-deoxyribonucleotide 3'-phosphate)-DNA + H2O = a 3'-end 2'-deoxyribonucleotide-DNA + phosphate. The enzyme catalyses a 5'-end dephospho-2'-deoxyribonucleoside-DNA + ATP = a 5'-end 5'-phospho-2'-deoxyribonucleoside-DNA + ADP + H(+). The chain is Putative bifunctional polynucleotide phosphatase/kinase from Acanthamoeba polyphaga mimivirus (APMV).